A 608-amino-acid chain; its full sequence is MPRDPNTLSNYNNWRTKHTIADLAIDFKKQRVHGTVTLQLESITDKESEEIILDTSFVDVQKIAVDGSKTEEWVLKERNEPYGSPLSVKIPGGAAKGTIIALDITISTTDKCTALQWLTPAQTSNKKFPYMFSQCQAIHNRSIFPCQDTPDVKSTYDFRIRSPLPVLASGLPRGAASFVHGENGESGTLLYSFYQEIPMPSYLFALSSGDIATASIGSRSLVSTGPEELLGAKWELERDTEKFIETIEKIVYPYEWTQYNVLVLPPSFPYGGMENPVFTFATPTIISGDRENVDVIAHELAHSWSGNLVSNASWEHFWLNEGWTVYLERRIIAAVHGEAYRDFSSIIGWKALEDSVKLFGEDHEFTKLVVDLKGKDPDDAFSSVPYEKGFHFLYYLERLVGKPTWDKFIPHYFTTWKKKSLDSYEFKATLLDFFASDEAASKALESVDWDSWFYKPGLPPKPEFDTSLVDKCYALAKKWESKDFVPSPSDIEGWSANQVVVFLQQVQLFTTPLTPSQSQAMGKAYSLVDTQNVELSSRYFGVGLAAKDESVYLPTAELLGKVGRMKFVRTLYRKLLVVDRKLAEETFEKNKDFYHPICREQVEKDLKE.

Substrate is bound by residues 134–136 (QCQ) and 269–274 (PYGGME). Histidine 298 serves as a coordination point for Zn(2+). The active-site Proton acceptor is glutamate 299. Zn(2+) contacts are provided by histidine 302 and glutamate 321. Tyrosine 386 (proton donor) is an active-site residue.

The protein belongs to the peptidase M1 family. Zn(2+) serves as cofactor.

It localises to the cytoplasm. The protein resides in the nucleus. The catalysed reaction is an epoxide + H2O = an ethanediol. Its function is as follows. Aminopeptidase that preferentially cleaves di- and tripeptides. Also has low epoxide hydrolase activity (in vitro). Can hydrolyze the epoxide leukotriene LTA(4) but it forms preferentially 5,6-dihydroxy-7,9,11,14-eicosatetraenoic acid rather than the cytokine leukotriene B(4) as the product compared to the homologous mammalian enzyme (in vitro). The protein is Leucine aminopeptidase 2 of Sclerotinia sclerotiorum (strain ATCC 18683 / 1980 / Ss-1) (White mold).